We begin with the raw amino-acid sequence, 185 residues long: Ribosome-recycling factor (185 aa).

This sequence belongs to the RRF family.

The protein localises to the cytoplasm. In terms of biological role, responsible for the release of ribosomes from messenger RNA at the termination of protein biosynthesis. May increase the efficiency of translation by recycling ribosomes from one round of translation to another. This Methylobacillus flagellatus (strain ATCC 51484 / DSM 6875 / VKM B-1610 / KT) protein is Ribosome-recycling factor.